A 120-amino-acid chain; its full sequence is uncharacterized protein (120 aa).

The protein belongs to the asp23 family.

This is an uncharacterized protein from Bacillus subtilis (strain 168).